A 602-amino-acid polypeptide reads, in one-letter code: Elongation factor 4 (602 aa).

In terms of domain architecture, tr-type G spans Arg-7–Gln-189. GTP-binding positions include Asp-19–Thr-24 and Asn-136–Asp-139.

It belongs to the TRAFAC class translation factor GTPase superfamily. Classic translation factor GTPase family. LepA subfamily.

The protein resides in the cell inner membrane. The catalysed reaction is GTP + H2O = GDP + phosphate + H(+). Functionally, required for accurate and efficient protein synthesis under certain stress conditions. May act as a fidelity factor of the translation reaction, by catalyzing a one-codon backward translocation of tRNAs on improperly translocated ribosomes. Back-translocation proceeds from a post-translocation (POST) complex to a pre-translocation (PRE) complex, thus giving elongation factor G a second chance to translocate the tRNAs correctly. Binds to ribosomes in a GTP-dependent manner. The protein is Elongation factor 4 of Xylella fastidiosa (strain M23).